The primary structure comprises 525 residues: Asparagine synthetase domain-containing protein YML096W (525 aa).

The For GATase activity role is filled by Cys-2. One can recognise a Glutamine amidotransferase type-2 domain in the interval 2-209; that stretch reads CGILLHYCPN…LNSNQRSHLP (208 aa). The Asparagine synthetase domain maps to 210-523; that stretch reads YEVTSEIDLN…GTDLLKENRN (314 aa). The tract at residues 503 to 525 is disordered; sequence SAKMTKDGNKHGTDLLKENRNCS. Positions 506-525 are enriched in basic and acidic residues; that stretch reads MTKDGNKHGTDLLKENRNCS.

It localises to the cytoplasm. The sequence is that of Asparagine synthetase domain-containing protein YML096W from Saccharomyces cerevisiae (strain ATCC 204508 / S288c) (Baker's yeast).